The primary structure comprises 28 residues: uncharacterized protein (28 aa).

This is an uncharacterized protein from Archaeoglobus fulgidus (strain ATCC 49558 / DSM 4304 / JCM 9628 / NBRC 100126 / VC-16).